A 125-amino-acid chain; its full sequence is Protein ApaG (125 aa).

Residues 1-125 (MFTSSKVAIQ…FRLAIPTLIN (125 aa)) form the ApaG domain.

The chain is Protein ApaG from Proteus mirabilis (strain HI4320).